The sequence spans 148 residues: Gastrin-releasing peptide (148 aa).

The N-terminal stretch at 1–23 (MRGRELPLVLLALVLCLAPRGRA) is a signal peptide. The residue at position 50 (Met-50) is a Methionine amide. Positions 54–148 (STGESSSVSE…EGRNPQLNQQ (95 aa)) are excised as a propeptide. The disordered stretch occupies residues 89-148 (EAKENRNHQPPQPKALGNQQPSWDSEDSSNFKDVGSKGKVGRLSAPGSQREGRNPQLNQQ).

This sequence belongs to the bombesin/neuromedin-B/ranatensin family.

The protein localises to the secreted. The protein resides in the cytoplasmic vesicle. It is found in the secretory vesicle lumen. Its subcellular location is the cell projection. It localises to the neuron projection. Stimulates the release of gastrin and other gastrointestinal hormones. Contributes to the perception of prurient stimuli and to the transmission of itch signals in the spinal cord that promote scratching behavior. Contributes primarily to nonhistaminergic itch sensation. In one study, shown to act in the amygdala as part of an inhibitory network which inhibits memory specifically related to learned fear. In another study, shown to act on vasoactive intestinal peptide (VIP)-expressing cells in the auditory cortex, most likely via extrasynaptic diffusion from local and long-range sources, to mediate disinhibition of glutamatergic cells via VIP cell-specific GRPR signaling which leads to enhanced auditory fear memories. Contributes to the regulation of food intake. Inhibits voltage-gated sodium channels but enhances voltage-gated potassium channels in hippocampal neurons. Induces sighing by acting directly on the pre-Botzinger complex, a cluster of several thousand neurons in the ventrolateral medulla responsible for inspiration during respiratory activity. In terms of biological role, induces an itch response through activation of receptors present on mast cells, triggering mast cell degranulation. The protein is Gastrin-releasing peptide (GRP) of Homo sapiens (Human).